Consider the following 197-residue polypeptide: ATP-dependent Clp protease proteolytic subunit 2 (197 aa).

Ser-96 functions as the Nucleophile in the catalytic mechanism. His-121 is an active-site residue.

Belongs to the peptidase S14 family. Fourteen ClpP subunits assemble into 2 heptameric rings which stack back to back to give a disk-like structure with a central cavity, resembling the structure of eukaryotic proteasomes.

It localises to the cytoplasm. The enzyme catalyses Hydrolysis of proteins to small peptides in the presence of ATP and magnesium. alpha-casein is the usual test substrate. In the absence of ATP, only oligopeptides shorter than five residues are hydrolyzed (such as succinyl-Leu-Tyr-|-NHMec, and Leu-Tyr-Leu-|-Tyr-Trp, in which cleavage of the -Tyr-|-Leu- and -Tyr-|-Trp bonds also occurs).. In terms of biological role, cleaves peptides in various proteins in a process that requires ATP hydrolysis. Has a chymotrypsin-like activity. Plays a major role in the degradation of misfolded proteins. In Synechococcus sp. (strain CC9605), this protein is ATP-dependent Clp protease proteolytic subunit 2.